The chain runs to 153 residues: Heavy metal-associated isoprenylated plant protein 25 (153 aa).

Residues 24–88 (LQTVDVRVLI…IIHRTGKRAE (65 aa)) form the HMA domain. A metal cation is bound by residues Cys-35 and Cys-38. Cys-150 bears the Cysteine methyl ester mark. Cys-150 is lipidated: S-farnesyl cysteine. Residues 151–153 (VVM) constitute a propeptide, removed in mature form.

It belongs to the HIPP family. As to expression, expressed in roots, shoot apical meristem, trichomes and flower buds.

The protein resides in the membrane. Its function is as follows. Heavy-metal-binding protein. Binds cadmium. May be involved in cadmium transport and play a role in cadmium detoxification. The polypeptide is Heavy metal-associated isoprenylated plant protein 25 (Arabidopsis thaliana (Mouse-ear cress)).